A 794-amino-acid chain; its full sequence is Signal transducer and activator of transcription 5A (794 aa).

Y90 carries the post-translational modification Phosphotyrosine. The residue at position 128 (S128) is a Phosphoserine. Residues 589-686 (WNDGAILGFV…EVFSKYYTPV (98 aa)) enclose the SH2 domain. Residue Y682 is modified to Phosphotyrosine. Y694 is modified (phosphotyrosine; by JAK2). The interval 771–794 (PMDSLEPSLPPPTGLFTPGRGSLS) is disordered.

This sequence belongs to the transcription factor STAT family. Forms a homodimer or a heterodimer with a related family member. Binds NR3C1. Interacts with NCOA1 and SOCS7. Interacts with ERBB4. Interacts with EBF4. Interacts with CD69. In terms of processing, ISGylated. Tyrosine phosphorylated in response to KITLG/SCF, IL2, IL3, IL7, IL15, CSF2/GMCSF, GH1, PRL, EPO and THPO. Activated KIT promotes phosphorylation on tyrosine residues and subsequent translocation to the nucleus. Tyrosine phosphorylated in response to constitutively activated FGFR1, FGFR2, FGFR3 and FGFR4. Tyrosine phosphorylation is required for DNA-binding activity and dimerization. Serine phosphorylation is also required for maximal transcriptional activity. Tyrosine phosphorylated in response to signaling via activated FLT3; wild-type FLT3 results in much weaker phosphorylation than constitutively activated mutant FLT3. Alternatively, can be phosphorylated by JAK2 at Tyr-694.

It localises to the cytoplasm. Its subcellular location is the nucleus. Its function is as follows. Carries out a dual function: signal transduction and activation of transcription. Mediates cellular responses to the cytokine KITLG/SCF and other growth factors. May mediate cellular responses to activated FGFR1, FGFR2, FGFR3 and FGFR4. Binds to the GAS element and activates PRL-induced transcription. Regulates the expression of milk proteins during lactation. In Bos taurus (Bovine), this protein is Signal transducer and activator of transcription 5A (STAT5A).